The chain runs to 283 residues: RNase adapter protein RapZ (283 aa).

ATP is bound at residue 8–15 (GRSGSGKS). 56-59 (DVRN) is a GTP binding site. An RNA-binding region spans residues 266 to 283 (RSRGKNVQSRHRTLEKRK).

The protein belongs to the RapZ-like family. RapZ subfamily. Homotrimer.

In terms of biological role, modulates the synthesis of GlmS, by affecting the processing and stability of the regulatory small RNA GlmZ. When glucosamine-6-phosphate (GlcN6P) concentrations are high in the cell, RapZ binds GlmZ and targets it to cleavage by RNase E. Consequently, GlmZ is inactivated and unable to activate GlmS synthesis. Under low GlcN6P concentrations, RapZ is sequestered and inactivated by an other regulatory small RNA, GlmY, preventing GlmZ degradation and leading to synthesis of GlmS. The chain is RNase adapter protein RapZ from Photorhabdus laumondii subsp. laumondii (strain DSM 15139 / CIP 105565 / TT01) (Photorhabdus luminescens subsp. laumondii).